Here is a 141-residue protein sequence, read N- to C-terminus: Photosystem II protein PSBR, chloroplastic (141 aa).

A chloroplast-targeting transit peptide spans 1 to 27 (MATMQISAKGLAPLRPRVSSRRVVKPV). Residues threonine 34 and threonine 37 each carry the phosphothreonine modification. At serine 43 the chain carries Phosphoserine. The helical transmembrane segment at 114-134 (GLIAWAGLVLVLLAVGVNLII) threads the bilayer.

Belongs to the psbR family.

The protein resides in the plastid. It localises to the chloroplast thylakoid membrane. Its function is as follows. Associated with the oxygen-evolving complex of photosystem II (PSII). Is required for the stable binding of LHCSR3 to PSII-LHCII supercomplexes and is essential for efficient energy-dependent quenching and the integrity of the PSII-LHCII-LHCSR3 supercomplex under continuous high light. This chain is Photosystem II protein PSBR, chloroplastic, found in Chlamydomonas reinhardtii (Chlamydomonas smithii).